The chain runs to 373 residues: Ferroptosis suppressor protein 1 (373 aa).

G2 carries the N-myristoyl glycine lipid modification. The chain crosses the membrane as a helical span at residues 7-27; that stretch reads VDTGAVHVVIVGGGFGGIAAA. Residues 18–22, R54, and V82 contribute to the 6-hydroxy-FAD site; that span reads GGGFG. An N6-acetyllysine modification is found at K168. Residue D285 coordinates 6-hydroxy-FAD.

Belongs to the FAD-dependent oxidoreductase family. In terms of assembly, interacts with importin subunits KPNA2 and IPO5; this interaction likely mediates the translocation into the nucleus upon oxidative stress. Requires 6-hydroxy-FAD as cofactor. Post-translationally, N-myristoylation at Gly-2 mediates the recruitment to lipid droplets and plasma membrane. Acetylation at Lys-168 prevents AIFM2 ubiquitination and degradation, thereby inhibiting ferroptosis. KAT2B mediates acetylation at Lys-168, while HDAC3 removes it. In terms of processing, ubiquitinated. AIFM2 undergoes 'Lys-29'-ubiquitination and proteasomal degradation, which is inhibited by acetylation at Lys-168. Detected in most normal tissues as two transcripts of 1.8 and 4.0 kb in length, respectively. Highly expressed in liver, testis, and kidney, and expressed at lower levels in pancreas, spleen, brain and lung. Expressed in heart (at protein level).

The protein localises to the lipid droplet. It localises to the cell membrane. The protein resides in the cytoplasm. Its subcellular location is the mitochondrion membrane. It is found in the nucleus. It catalyses the reaction ubiquinone-10 + NADH + H(+) = ubiquinol-10 + NAD(+). The enzyme catalyses phylloquinone + NADH + H(+) = phylloquinol + NAD(+). It carries out the reaction menaquinone-4 + NADH + H(+) = menaquinol-4 + NAD(+). The catalysed reaction is menadione + NADH + H(+) = menadiol + NAD(+). With respect to regulation, the modification by 4-hydroxy-2-nonenal (HNE) adduction in mitochondria results in loss of the oxidoreductase activity and activation of a novel function in mitochondrial oxidative stress signaling. In terms of biological role, a NAD(P)H-dependent oxidoreductase that acts as a key inhibitor of ferroptosis. At the plasma membrane, catalyzes reduction of coenzyme Q/ubiquinone-10 to ubiquinol-10, a lipophilic radical-trapping antioxidant that prevents lipid oxidative damage and consequently ferroptosis. Acts in parallel to GPX4 to suppress phospholipid peroxidation and ferroptosis. This anti-ferroptotic function is independent of cellular glutathione levels. Also acts as a potent radical-trapping antioxidant by mediating warfarin-resistant vitamin K reduction in the canonical vitamin K cycle: catalyzes NAD(P)H-dependent reduction of vitamin K (phylloquinone, menaquinone-4 and menadione) to hydroquinone forms. Hydroquinones act as potent radical-trapping antioxidants inhibitor of phospholipid peroxidation and ferroptosis. May play a role in mitochondrial stress signaling. Upon oxidative stress, associates with the lipid peroxidation end product 4-hydroxy-2-nonenal (HNE) forming a lipid adduct devoid of oxidoreductase activity, which then translocates from mitochondria into the nucleus triggering DNA damage and cell death. This Mus musculus (Mouse) protein is Ferroptosis suppressor protein 1.